An 81-amino-acid chain; its full sequence is Cytochrome b559 subunit alpha (81 aa).

Residues 21–35 (VIHSITIPALFIAGW) traverse the membrane as a helical segment. A heme-binding site is contributed by H23.

Belongs to the PsbE/PsbF family. In terms of assembly, heterodimer of an alpha subunit and a beta subunit. PSII is composed of 1 copy each of membrane proteins PsbA, PsbB, PsbC, PsbD, PsbE, PsbF, PsbH, PsbI, PsbJ, PsbK, PsbL, PsbM, PsbT, PsbX, PsbY, PsbZ, Psb30/Ycf12, at least 3 peripheral proteins of the oxygen-evolving complex and a large number of cofactors. It forms dimeric complexes. Heme b is required as a cofactor.

Its subcellular location is the plastid. The protein resides in the chloroplast thylakoid membrane. Its function is as follows. This b-type cytochrome is tightly associated with the reaction center of photosystem II (PSII). PSII is a light-driven water:plastoquinone oxidoreductase that uses light energy to abstract electrons from H(2)O, generating O(2) and a proton gradient subsequently used for ATP formation. It consists of a core antenna complex that captures photons, and an electron transfer chain that converts photonic excitation into a charge separation. The sequence is that of Cytochrome b559 subunit alpha from Tetradesmus obliquus (Green alga).